The following is a 647-amino-acid chain: Sialidase (647 aa).

The N-terminal stretch at 1 to 37 is a signal peptide; the sequence is MTANPYLRRLPRRRAVSFLLAPALAAATVAGASPAQA. Substrate is bound at residue Arg-68. Asp-92 (proton acceptor) is an active-site residue. BNR repeat units lie at residues 102 to 113, 175 to 186, and 239 to 250; these read RRSTDGGRTWGE, ATSTDGGLTWSH, and VYSDDHGRTWRA. Residue Glu-260 is the Nucleophile of the active site. Arg-276 is a substrate binding site. BNR repeat units lie at residues 287–298 and 348–359; these read AVSTDGGHSYGP and RMSCDDGQTWPV. Tyr-370 functions as the Nucleophile in the catalytic mechanism. Positions 496 to 646 constitute an F5/8 type C domain; the sequence is TFTVTVGLLD…AVAELEVEGQ (151 aa).

The protein belongs to the glycosyl hydrolase 33 family.

It is found in the secreted. It carries out the reaction Hydrolysis of alpha-(2-&gt;3)-, alpha-(2-&gt;6)-, alpha-(2-&gt;8)- glycosidic linkages of terminal sialic acid residues in oligosaccharides, glycoproteins, glycolipids, colominic acid and synthetic substrates.. Its function is as follows. To release sialic acids for use as carbon and energy sources for this non-pathogenic bacterium while in pathogenic microorganisms, sialidases have been suggested to be pathogenic factors. This Micromonospora viridifaciens protein is Sialidase (nedA).